A 97-amino-acid polypeptide reads, in one-letter code: Putative membrane protein insertion efficiency factor (97 aa).

The interval 77-97 (VPDAPASPSPSSSCSCKGPHP) is disordered. The span at 85-97 (SPSSSCSCKGPHP) shows a compositional bias: low complexity.

It belongs to the UPF0161 family.

Its subcellular location is the cell inner membrane. Functionally, could be involved in insertion of integral membrane proteins into the membrane. The sequence is that of Putative membrane protein insertion efficiency factor from Xanthomonas euvesicatoria pv. vesicatoria (strain 85-10) (Xanthomonas campestris pv. vesicatoria).